Reading from the N-terminus, the 161-residue chain is Probable metalloprotease HVO_1016 (161 aa).

Residues 10-131 (VGIAADALDF…WEAFDQSGEV (122 aa)) enclose the MPN domain. The Proton donor/acceptor role is filled by E31. The Zn(2+) site is built by H87, H89, and D100. The JAMM motif signature appears at 87 to 100 (HSHPNGVLRPSDAD).

The protein belongs to the peptidase M67B family. In terms of assembly, monomer and homodimer. It depends on Zn(2+) as a cofactor.

Probable metalloprotease. Does not hydrolyze SAMP1- and SAMP2-protein conjugates, diglycine-AMC, Ub-AMC, hemoglobin, cytochrome c, carbonic anhydrase, creatinine phosphokinase, beta-amylase and bovine serum albumin. The protein is Probable metalloprotease HVO_1016 of Haloferax volcanii (strain ATCC 29605 / DSM 3757 / JCM 8879 / NBRC 14742 / NCIMB 2012 / VKM B-1768 / DS2) (Halobacterium volcanii).